The sequence spans 521 residues: Exodeoxyribonuclease 7 large subunit (521 aa).

A disordered region spans residues 494–521 (ATSGAARPKPAAKPSTKAKEPGNQGSLF). A compositionally biased stretch (low complexity) spans 498-508 (AARPKPAAKPS).

Belongs to the XseA family. As to quaternary structure, heterooligomer composed of large and small subunits.

It is found in the cytoplasm. The catalysed reaction is Exonucleolytic cleavage in either 5'- to 3'- or 3'- to 5'-direction to yield nucleoside 5'-phosphates.. Bidirectionally degrades single-stranded DNA into large acid-insoluble oligonucleotides, which are then degraded further into small acid-soluble oligonucleotides. This chain is Exodeoxyribonuclease 7 large subunit, found in Mesorhizobium japonicum (strain LMG 29417 / CECT 9101 / MAFF 303099) (Mesorhizobium loti (strain MAFF 303099)).